A 303-amino-acid polypeptide reads, in one-letter code: Glycine--tRNA ligase alpha subunit (303 aa).

Belongs to the class-II aminoacyl-tRNA synthetase family. Tetramer of two alpha and two beta subunits.

The protein resides in the cytoplasm. It catalyses the reaction tRNA(Gly) + glycine + ATP = glycyl-tRNA(Gly) + AMP + diphosphate. This Salmonella arizonae (strain ATCC BAA-731 / CDC346-86 / RSK2980) protein is Glycine--tRNA ligase alpha subunit.